A 247-amino-acid chain; its full sequence is Probable transcriptional regulatory protein GAU_0635 (247 aa).

Belongs to the TACO1 family.

It is found in the cytoplasm. This Gemmatimonas aurantiaca (strain DSM 14586 / JCM 11422 / NBRC 100505 / T-27) protein is Probable transcriptional regulatory protein GAU_0635.